Here is a 432-residue protein sequence, read N- to C-terminus: Adenylosuccinate synthetase (432 aa).

GTP is bound by residues Gly-13–Lys-19 and Gly-41–Thr-43. Residue Asp-14 is the Proton acceptor of the active site. The Mg(2+) site is built by Asp-14 and Gly-41. IMP contacts are provided by residues Asp-14–Lys-17, Asn-39–His-42, Thr-130, Arg-144, Gln-225, Thr-240, and Arg-304. Residue His-42 is the Proton donor of the active site. Position 300 to 306 (Ala-300 to Arg-306) interacts with substrate. GTP-binding positions include Arg-306, Lys-332–Asp-334, and Ser-415–Gly-417.

Belongs to the adenylosuccinate synthetase family. As to quaternary structure, homodimer. Mg(2+) is required as a cofactor.

The protein resides in the cytoplasm. The enzyme catalyses IMP + L-aspartate + GTP = N(6)-(1,2-dicarboxyethyl)-AMP + GDP + phosphate + 2 H(+). The protein operates within purine metabolism; AMP biosynthesis via de novo pathway; AMP from IMP: step 1/2. Functionally, plays an important role in the de novo pathway of purine nucleotide biosynthesis. Catalyzes the first committed step in the biosynthesis of AMP from IMP. In Shigella sonnei (strain Ss046), this protein is Adenylosuccinate synthetase.